Here is a 544-residue protein sequence, read N- to C-terminus: Protein angel homolog 2 (544 aa).

Belongs to the CCR4/nocturin family.

This Mus musculus (Mouse) protein is Protein angel homolog 2 (Angel2).